The following is a 158-amino-acid chain: NAD(P)H-quinone oxidoreductase subunit J, chloroplastic (158 aa).

The protein belongs to the complex I 30 kDa subunit family. As to quaternary structure, NDH is composed of at least 16 different subunits, 5 of which are encoded in the nucleus.

The protein localises to the plastid. It is found in the chloroplast thylakoid membrane. It catalyses the reaction a plastoquinone + NADH + (n+1) H(+)(in) = a plastoquinol + NAD(+) + n H(+)(out). The enzyme catalyses a plastoquinone + NADPH + (n+1) H(+)(in) = a plastoquinol + NADP(+) + n H(+)(out). Functionally, NDH shuttles electrons from NAD(P)H:plastoquinone, via FMN and iron-sulfur (Fe-S) centers, to quinones in the photosynthetic chain and possibly in a chloroplast respiratory chain. The immediate electron acceptor for the enzyme in this species is believed to be plastoquinone. Couples the redox reaction to proton translocation, and thus conserves the redox energy in a proton gradient. This chain is NAD(P)H-quinone oxidoreductase subunit J, chloroplastic, found in Platanus occidentalis (Sycamore).